The chain runs to 181 residues: ATP-dependent protease subunit HslV (181 aa).

The active site involves threonine 7. The Na(+) site is built by alanine 162, cysteine 165, and threonine 168.

This sequence belongs to the peptidase T1B family. HslV subfamily. In terms of assembly, a double ring-shaped homohexamer of HslV is capped on each side by a ring-shaped HslU homohexamer. The assembly of the HslU/HslV complex is dependent on binding of ATP.

Its subcellular location is the cytoplasm. It carries out the reaction ATP-dependent cleavage of peptide bonds with broad specificity.. Its activity is regulated as follows. Allosterically activated by HslU binding. Functionally, protease subunit of a proteasome-like degradation complex believed to be a general protein degrading machinery. In Coxiella burnetii (strain RSA 493 / Nine Mile phase I), this protein is ATP-dependent protease subunit HslV.